A 175-amino-acid chain; its full sequence is Lipoprotein signal peptidase (175 aa).

The next 4 membrane-spanning stretches (helical) occupy residues L25 to V45, V56 to A76, W81 to L101, and F110 to V130. Residues D136 and D154 contribute to the active site. The chain crosses the membrane as a helical span at residues H146 to V166.

It belongs to the peptidase A8 family.

The protein resides in the cell inner membrane. The enzyme catalyses Release of signal peptides from bacterial membrane prolipoproteins. Hydrolyzes -Xaa-Yaa-Zaa-|-(S,diacylglyceryl)Cys-, in which Xaa is hydrophobic (preferably Leu), and Yaa (Ala or Ser) and Zaa (Gly or Ala) have small, neutral side chains.. The protein operates within protein modification; lipoprotein biosynthesis (signal peptide cleavage). Its function is as follows. This protein specifically catalyzes the removal of signal peptides from prolipoproteins. The protein is Lipoprotein signal peptidase of Cupriavidus necator (strain ATCC 17699 / DSM 428 / KCTC 22496 / NCIMB 10442 / H16 / Stanier 337) (Ralstonia eutropha).